Here is a 342-residue protein sequence, read N- to C-terminus: Galactose mutarotase (342 aa).

A Phosphoserine modification is found at S14. Residues 81-82 (NR), H107, 176-178 (HSY), D243, Q279, and E307 each bind beta-D-galactose. Residue H176 is the Proton donor of the active site. E307 (proton acceptor) is an active-site residue.

This sequence belongs to the aldose epimerase family. In terms of assembly, monomer.

It localises to the cytoplasm. The catalysed reaction is alpha-D-galactose = beta-D-galactose. It catalyses the reaction alpha-D-glucose = beta-D-glucose. It participates in carbohydrate metabolism; hexose metabolism. Its pathway is carbohydrate metabolism; galactose metabolism. Functionally, mutarotase that catalyzes the interconversion of beta-D-galactose and alpha-D-galactose during galactose metabolism. Beta-D-galactose is metabolized in the liver into glucose 1-phosphate, the primary metabolic fuel, by the action of four enzymes that constitute the Leloir pathway: GALM, GALK1 (galactokinase), GALT (galactose-1-phosphate uridylyltransferase) and GALE (UDP-galactose-4'-epimerase). Involved in the maintenance of the equilibrium between the beta- and alpha-anomers of galactose, therefore ensuring a sufficient supply of the alpha-anomer for GALK1. Also active on D-glucose although shows a preference for galactose over glucose. This chain is Galactose mutarotase, found in Mus musculus (Mouse).